A 270-amino-acid polypeptide reads, in one-letter code: Glucosamine-6-phosphate deaminase (270 aa).

Residue Asp-72 is the Proton acceptor; for enolization step of the active site. Catalysis depends on Asp-141, which acts as the For ring-opening step. His-143 functions as the Proton acceptor; for ring-opening step in the catalytic mechanism. Glu-148 acts as the For ring-opening step in catalysis.

It belongs to the glucosamine/galactosamine-6-phosphate isomerase family. NagB subfamily. In terms of assembly, homohexamer.

The enzyme catalyses alpha-D-glucosamine 6-phosphate + H2O = beta-D-fructose 6-phosphate + NH4(+). The protein operates within amino-sugar metabolism; N-acetylneuraminate degradation; D-fructose 6-phosphate from N-acetylneuraminate: step 5/5. With respect to regulation, allosterically activated by N-acetylglucosamine 6-phosphate (GlcNAc6P). In terms of biological role, catalyzes the reversible isomerization-deamination of glucosamine 6-phosphate (GlcN6P) to form fructose 6-phosphate (Fru6P) and ammonium ion. This chain is Glucosamine-6-phosphate deaminase, found in Photorhabdus laumondii subsp. laumondii (strain DSM 15139 / CIP 105565 / TT01) (Photorhabdus luminescens subsp. laumondii).